The following is a 169-amino-acid chain: Probable phospholipid hydroperoxide glutathione peroxidase (169 aa).

The active site involves C43.

This sequence belongs to the glutathione peroxidase family. As to quaternary structure, monomer. Has a tendency to form higher mass oligomers. Interacts with FUNDC1; this interaction promotes GPX4 recruitment into mitochondria through TOM/TIM complex where it is degraded by mitophagy.

Its subcellular location is the cytoplasm. It catalyses the reaction a hydroperoxy polyunsaturated fatty acid + 2 glutathione = a hydroxy polyunsaturated fatty acid + glutathione disulfide + H2O. Functionally, protects cells and enzymes from oxidative damage, by catalyzing the reduction of hydrogen peroxide, lipid peroxides and organic hydroperoxide, by glutathione. The chain is Probable phospholipid hydroperoxide glutathione peroxidase (GPXle-1) from Solanum lycopersicum (Tomato).